Reading from the N-terminus, the 146-residue chain is uncharacterized protein (146 aa).

The region spanning 1–120 (MTDKFDANDE…TILKWEKNMD (120 aa)) is the N-acetyltransferase domain.

Belongs to the acetyltransferase family.

This is an uncharacterized protein from Streptococcus pyogenes serotype M6 (strain ATCC BAA-946 / MGAS10394).